The primary structure comprises 253 residues: Trypsin beta (253 aa).

The first 22 residues, 1–22 (MLKFVILLSAVACALGGTIPEG), serve as a signal peptide directing secretion. Positions 23 to 30 (LLPQLDGR) are cleaved as a propeptide — activation peptide. In terms of domain architecture, Peptidase S1 spans 31–253 (IVGGTATTIS…DLRSWVINNA (223 aa)). Cysteine 56 and cysteine 72 are joined by a disulfide. Residues histidine 71 and aspartate 116 each act as charge relay system in the active site. Cystine bridges form between cysteine 180–cysteine 197 and cysteine 206–cysteine 230. Serine 210 (charge relay system) is an active-site residue.

It belongs to the peptidase S1 family.

Its subcellular location is the secreted. The protein resides in the extracellular space. The enzyme catalyses Preferential cleavage: Arg-|-Xaa, Lys-|-Xaa.. The protein is Trypsin beta (betaTry) of Drosophila erecta (Fruit fly).